The sequence spans 354 residues: uncharacterized protein (354 aa).

An N-terminal signal peptide occupies residues 1–21 (MRYLLIVITFFMGFSSLPAWA).

This sequence to E.coli YbgO.

Functionally, may be involved in a fimbrial system chaperoned by YqiH and exported by YqiG. This is an uncharacterized protein from Escherichia coli (strain K12).